Reading from the N-terminus, the 297-residue chain is Zinc finger protein 784 (297 aa).

Residues 1-12 show a composition bias toward pro residues; that stretch reads MAAARPDPPIPS. Positions 1–39 are disordered; that stretch reads MAAARPDPPIPSSPTRESPSPEPPDLVLVPDGRPVTPPG. A Phosphoserine modification is found at Ser-13. C2H2-type zinc fingers lie at residues 64–86, 100–122, and 128–150; these read FHCALCPAAFRLVSELLFHEHGH, SRCHVCGHSCPGPASLRAHYSLH, and YRCSLCPRAFKALAPLLRHQHRH. The tract at residues 149 to 175 is disordered; that stretch reads RHGVEPGTSERLLPTTTTGQPNSRVAQ. Residues 162–173 are compositionally biased toward polar residues; that stretch reads PTTTTGQPNSRV. C2H2-type zinc fingers lie at residues 195–217, 223–245, and 251–273; these read FACRFCAKPFRRSSDMRDHERVH, YHCSICGKGFTQSSVLSGHARIH, and FRCMLCDRTFNNSSNFRKHQRTH. The segment at 268-297 is disordered; the sequence is KHQRTHFHGPGSGVGESRGQLRSSSVSQES. Polar residues predominate over residues 287 to 297; that stretch reads QLRSSSVSQES.

This sequence belongs to the krueppel C2H2-type zinc-finger protein family.

It localises to the nucleus. Its function is as follows. May be involved in transcriptional regulation. This Mus musculus (Mouse) protein is Zinc finger protein 784 (Znf784).